The following is a 520-amino-acid chain: Cholesterol side-chain cleavage enzyme, mitochondrial (520 aa).

Residues 1 to 39 (MLVRGLPLRSVLVKGCQPLLSAPREGPGHPRVPTGEGAG) constitute a mitochondrion transit peptide. Residues 19–47 (LLSAPREGPGHPRVPTGEGAGMSSHSPRP) form a disordered region. Residue Cys-461 coordinates heme.

This sequence belongs to the cytochrome P450 family. Interacts with FDX1/adrenodoxin. It depends on heme as a cofactor.

Its subcellular location is the mitochondrion inner membrane. It carries out the reaction 6 reduced [adrenodoxin] + cholesterol + 3 O2 + 6 H(+) = 4-methylpentanal + pregnenolone + 6 oxidized [adrenodoxin] + 4 H2O. The enzyme catalyses 2 reduced [adrenodoxin] + cholesterol + O2 + 2 H(+) = (22R)-hydroxycholesterol + 2 oxidized [adrenodoxin] + H2O. It catalyses the reaction (22R)-hydroxycholesterol + 2 reduced [adrenodoxin] + O2 + 2 H(+) = (20R,22R)-20,22-dihydroxycholesterol + 2 oxidized [adrenodoxin] + H2O. The catalysed reaction is (20R,22R)-20,22-dihydroxycholesterol + 2 reduced [adrenodoxin] + O2 + 2 H(+) = 4-methylpentanal + pregnenolone + 2 oxidized [adrenodoxin] + 2 H2O. The protein operates within lipid metabolism; C21-steroid hormone metabolism. It functions in the pathway steroid metabolism; cholesterol metabolism. A cytochrome P450 monooxygenase that catalyzes the side-chain hydroxylation and cleavage of cholesterol to pregnenolone, the precursor of most steroid hormones. Catalyzes three sequential oxidation reactions of cholesterol, namely the hydroxylation at C22 followed with the hydroxylation at C20 to yield 20R,22R-hydroxycholesterol that is further cleaved between C20 and C22 to yield the C21-steroid pregnenolone and 4-methylpentanal. Mechanistically, uses molecular oxygen inserting one oxygen atom into a substrate and reducing the second into a water molecule. Two electrons are provided by NADPH via a two-protein mitochondrial transfer system comprising flavoprotein FDXR (adrenodoxin/ferredoxin reductase) and nonheme iron-sulfur protein FDX1 or FDX2 (adrenodoxin/ferredoxin). The sequence is that of Cholesterol side-chain cleavage enzyme, mitochondrial (CYP11A1) from Equus caballus (Horse).